Consider the following 96-residue polypeptide: Small ribosomal subunit protein bS18 (96 aa).

Residues 1-18 (MPPPRGKGRFGKDKRPKR) are compositionally biased toward basic residues. Positions 1-21 (MPPPRGKGRFGKDKRPKRNTQ) are disordered.

The protein belongs to the bacterial ribosomal protein bS18 family. Part of the 30S ribosomal subunit. Forms a tight heterodimer with protein bS6.

Its function is as follows. Binds as a heterodimer with protein bS6 to the central domain of the 16S rRNA, where it helps stabilize the platform of the 30S subunit. The sequence is that of Small ribosomal subunit protein bS18 from Methylibium petroleiphilum (strain ATCC BAA-1232 / LMG 22953 / PM1).